The chain runs to 285 residues: Glutamate racemase (285 aa).

Substrate-binding positions include 28 to 29 and 60 to 61; these read DS and YG. Cys-92 serves as the catalytic Proton donor/acceptor. 93–94 lines the substrate pocket; the sequence is NT. Residue Cys-204 is the Proton donor/acceptor of the active site. Substrate is bound at residue 205–206; the sequence is TH.

The protein belongs to the aspartate/glutamate racemases family.

The enzyme catalyses L-glutamate = D-glutamate. It participates in cell wall biogenesis; peptidoglycan biosynthesis. Provides the (R)-glutamate required for cell wall biosynthesis. The polypeptide is Glutamate racemase (Escherichia fergusonii (strain ATCC 35469 / DSM 13698 / CCUG 18766 / IAM 14443 / JCM 21226 / LMG 7866 / NBRC 102419 / NCTC 12128 / CDC 0568-73)).